The following is a 241-amino-acid chain: GTP cyclohydrolase 1 type 2 homolog (241 aa).

The a divalent metal cation site is built by His-62, His-63, Asp-101, His-207, and Glu-211.

It belongs to the GTP cyclohydrolase I type 2/NIF3 family. As to quaternary structure, homohexamer.

The protein is GTP cyclohydrolase 1 type 2 homolog of Campylobacter jejuni subsp. jejuni serotype O:2 (strain ATCC 700819 / NCTC 11168).